Consider the following 124-residue polypeptide: Probable glycine cleavage system H protein (124 aa).

Residues 25 to 106 (TATIGITDYA…PYGSWLVKMA (82 aa)) form the Lipoyl-binding domain. At lysine 66 the chain carries N6-lipoyllysine.

Belongs to the GcvH family. The glycine cleavage system is composed of four proteins: P, T, L and H. The cofactor is (R)-lipoate.

In terms of biological role, the glycine cleavage system catalyzes the degradation of glycine. The H protein shuttles the methylamine group of glycine from the P protein to the T protein. In Thermoplasma acidophilum (strain ATCC 25905 / DSM 1728 / JCM 9062 / NBRC 15155 / AMRC-C165), this protein is Probable glycine cleavage system H protein.